A 92-amino-acid polypeptide reads, in one-letter code: DNA-directed RNA polymerase subunit omega (92 aa).

The protein belongs to the RNA polymerase subunit omega family. In terms of assembly, the RNAP catalytic core consists of 2 alpha, 1 beta, 1 beta' and 1 omega subunit. When a sigma factor is associated with the core the holoenzyme is formed, which can initiate transcription.

The enzyme catalyses RNA(n) + a ribonucleoside 5'-triphosphate = RNA(n+1) + diphosphate. Promotes RNA polymerase assembly. Latches the N- and C-terminal regions of the beta' subunit thereby facilitating its interaction with the beta and alpha subunits. This Shewanella denitrificans (strain OS217 / ATCC BAA-1090 / DSM 15013) protein is DNA-directed RNA polymerase subunit omega.